Consider the following 351-residue polypeptide: Transcriptional activator POG1 (351 aa).

The span at methionine 1 to histidine 26 shows a compositional bias: basic and acidic residues. A disordered region spans residues methionine 1 to lysine 56. The segment covering threonine 27–lysine 56 has biased composition (polar residues). Residues serine 152 and serine 168 each carry the phosphoserine modification. Disordered regions lie at residues proline 234 to methionine 256 and glutamine 291 to threonine 351. Residues glutamine 241–methionine 256 show a composition bias toward polar residues. At serine 314 the chain carries Phosphoserine.

This sequence belongs to the POG1 family. Post-translationally, phosphorylated by CDC28.

Its subcellular location is the nucleus. Transcriptional activator which promotes cell cycle recovery with CLN2, after pheromone induced G1 arrest, probably inhibiting the ability of STE20 to activate the pheromone response pathway. Binds the promoters of genes that function in cell cycle regulation, cytoskeletal organization, and spindle assembly. May also be involved in stress-resistance. This is Transcriptional activator POG1 (POG1) from Saccharomyces cerevisiae (strain ATCC 204508 / S288c) (Baker's yeast).